The following is a 117-amino-acid chain: Protein OPG035 (117 aa).

It belongs to the poxviridae OPG035 family.

Its function is as follows. Bcl-2-like protein which contributes to virulence by preventing host NF-kappa-B activation in response to pro-inflammatory stimuli such as TNF-alpha or IL1B. The chain is Protein OPG035 (OPG035) from Bos taurus (Bovine).